Consider the following 343-residue polypeptide: MDDNKRKSLDAALKSLDKTFGKGTILRLGDKEVEQIDSIGTGSVGLDLALGIGGIPKGRIVEIYGPESSGKTTLTLHIIAECQKAGGVCAFIDAEHALDVKYAKNLGVNTDDLYVSQPDFGEQALEIVETIARSGAVDLIVVDSVAALTPKAEIEGDMGDQHVGLQARLMSQALRKLTGIVHKMNTTVIFINQIRIKIGATGYGTPETTTGGNALKFYASVRLDVRKIATLKQNEEPIGNRVKVKVVKNKVAPPFRQAEFDVMFGEGLSREGELIDYGVKLDIVDKSGAWFSYKDKKLGQGRENSKAFLKENPEIADEITKAIQNSMGIEGMISGSEDDEGEE.

65–72 is a binding site for ATP; that stretch reads GPESSGKT.

This sequence belongs to the RecA family.

The protein localises to the cytoplasm. In terms of biological role, can catalyze the hydrolysis of ATP in the presence of single-stranded DNA, the ATP-dependent uptake of single-stranded DNA by duplex DNA, and the ATP-dependent hybridization of homologous single-stranded DNAs. It interacts with LexA causing its activation and leading to its autocatalytic cleavage. The chain is Protein RecA from Campylobacter jejuni subsp. doylei (strain ATCC BAA-1458 / RM4099 / 269.97).